An 81-amino-acid chain; its full sequence is Photosystem I iron-sulfur center (81 aa).

4Fe-4S ferredoxin-type domains are found at residues 2-31 and 37-68; these read SHSV…MVPW and GQIA…IRVY. Positions 11, 14, 17, 21, 48, 51, 54, and 58 each coordinate [4Fe-4S] cluster.

In terms of assembly, the cyanobacterial PSI reaction center is composed of one copy each of PsaA,B,C,D,E,F,I,J,K,L,M and X, and forms trimeric complexes. The cofactor is [4Fe-4S] cluster.

It localises to the cellular thylakoid membrane. The enzyme catalyses reduced [plastocyanin] + hnu + oxidized [2Fe-2S]-[ferredoxin] = oxidized [plastocyanin] + reduced [2Fe-2S]-[ferredoxin]. Its function is as follows. Apoprotein for the two 4Fe-4S centers FA and FB of photosystem I (PSI); essential for photochemical activity. FB is the terminal electron acceptor of PSI, donating electrons to ferredoxin. The C-terminus interacts with PsaA/B/D and helps assemble the protein into the PSI complex. Required for binding of PsaD and PsaE to PSI. PSI is a plastocyanin/cytochrome c6-ferredoxin oxidoreductase, converting photonic excitation into a charge separation, which transfers an electron from the donor P700 chlorophyll pair to the spectroscopically characterized acceptors A0, A1, FX, FA and FB in turn. This is Photosystem I iron-sulfur center from Synechococcus sp. (strain RCC307).